The following is a 401-amino-acid chain: 2,3,4,5-tetrahydropyridine-2,6-dicarboxylate N-succinyltransferase (401 aa).

The active-site Acyl-anhydride intermediate is the Glu-269. Succinyl-CoA-binding positions include Arg-271, Gly-286, Ser-289, Ala-312, 327 to 328, Gly-335, and Lys-364; that span reads DA.

This sequence belongs to the type 2 tetrahydrodipicolinate N-succinyltransferase family. As to quaternary structure, homotrimer.

Its subcellular location is the cytoplasm. The enzyme catalyses (S)-2,3,4,5-tetrahydrodipicolinate + succinyl-CoA + H2O = (S)-2-succinylamino-6-oxoheptanedioate + CoA. The protein operates within amino-acid biosynthesis; L-lysine biosynthesis via DAP pathway; LL-2,6-diaminopimelate from (S)-tetrahydrodipicolinate (succinylase route): step 1/3. Its function is as follows. Catalyzes the conversion of the cyclic tetrahydrodipicolinate (THDP) into the acyclic N-succinyl-L-2-amino-6-oxopimelate using succinyl-CoA. This Helicobacter pylori (strain ATCC 700392 / 26695) (Campylobacter pylori) protein is 2,3,4,5-tetrahydropyridine-2,6-dicarboxylate N-succinyltransferase.